A 232-amino-acid chain; its full sequence is Putative N-acetylmannosamine-6-phosphate 2-epimerase (232 aa).

The protein belongs to the NanE family.

It catalyses the reaction an N-acyl-D-glucosamine 6-phosphate = an N-acyl-D-mannosamine 6-phosphate. Its pathway is amino-sugar metabolism; N-acetylneuraminate degradation; D-fructose 6-phosphate from N-acetylneuraminate: step 3/5. In terms of biological role, converts N-acetylmannosamine-6-phosphate (ManNAc-6-P) to N-acetylglucosamine-6-phosphate (GlcNAc-6-P). The sequence is that of Putative N-acetylmannosamine-6-phosphate 2-epimerase from Proteus mirabilis (strain HI4320).